The sequence spans 127 residues: Evasin P467 (127 aa).

Positions methionine 1–glycine 21 are cleaved as a signal peptide. Intrachain disulfides connect cysteine 42–cysteine 63, cysteine 59–cysteine 100, cysteine 76–cysteine 105, and cysteine 95–cysteine 114. 2 N-linked (GlcNAc...) asparagine glycosylation sites follow: asparagine 49 and asparagine 94.

The protein localises to the secreted. Its function is as follows. Salivary chemokine-binding protein which binds to host chemokines CCL1, CCL2, CCL3 and CCL5. This chain is Evasin P467, found in Rhipicephalus pulchellus (Yellow backed tick).